The sequence spans 654 residues: Protein fem-1 homolog A-A (654 aa).

7 ANK repeats span residues 2–31, 40–70, 82–111, 115–145, 149–178, 182–211, and 214–243; these read DLHT…REEL, GGGT…SVEA, EGAP…SVNR, TNST…DLEV, HGHT…QVNR, KGNT…RMER, and YGMT…GHEQ. Ser-108 carries the phosphoserine modification. Residues 242–265 form a disordered region; sequence EQLSGTELPGEGSSQVAGNHCSTP. A compositionally biased stretch (polar residues) spans 253–263; sequence GSSQVAGNHCS. TPR repeat units follow at residues 283-317 and 375-408; these read VEAL…RHQG and SYYI…QQNN. ANK repeat units lie at residues 519–561 and 565–594; these read NGFT…DPDS and DNNT…HMDA. Phosphoserine is present on Ser-608.

This sequence belongs to the fem-1 family. Component of a CRL2 E3 ubiquitin-protein ligase complex, also named ECS (Elongin BC-CUL2/5-SOCS-box protein) complex, composed of CUL2, Elongin BC (ELOB and ELOC), RBX1 and substrate-specific adapter FEM1A. Interacts with PTGER4. Interacts with NFKB1; the interaction is direct. Phosphorylated; highly phosphorylated in myoblasts and myotubes. Phosphorylation at Ser-108 and Ser-608 promote PGE2-EP4-mediated inhibition of inflammation. Dephosphorylated by protein phosphatase 2A (PP2A). In terms of tissue distribution, preferentially expressed in cardiac muscle, brain and liver (at protein level). Also expressed in skeletal muscle.

It localises to the mitochondrion. The protein localises to the cytoplasm. It functions in the pathway protein modification; protein ubiquitination. Functionally, substrate-recognition component of a Cul2-RING (CRL2) E3 ubiquitin-protein ligase complex of the DesCEND (destruction via C-end degrons) pathway, which recognizes a C-degron located at the extreme C terminus of target proteins, leading to their ubiquitination and degradation. The C-degron recognized by the DesCEND pathway is usually a motif of less than ten residues and can be present in full-length proteins, truncated proteins or proteolytically cleaved forms. The CRL2(FEM1A) complex specifically recognizes proteins with an arginine at the C-terminus: recognizes and binds proteins ending with -Lys/Arg-Xaa-Arg and -Lys/Arg-Xaa-Xaa-Arg C-degrons, such as SIL1 or OR51B2, leading to their ubiquitination and degradation. Involved in PGE2-EP4-mediated inhibition of inflammation of macrophages via interaction with NFKB1 and PTGER4. Promotes inflammation in brain microglia through MAP2K4/MKK4-mediated signaling. The protein is Protein fem-1 homolog A-A of Mus musculus (Mouse).